Reading from the N-terminus, the 483-residue chain is Galactose-3-O-sulfotransferase 4 (483 aa).

The Cytoplasmic portion of the chain corresponds to 1-18 (MGVLSPTRTMRLWGPRSL). Residues 19–39 (GVALGVFMTIGFALQLLGGPF) traverse the membrane as a helical; Signal-anchor for type II membrane protein segment. The Lumenal portion of the chain corresponds to 40–483 (QRRLPGLQLR…PLKTSRRPSP (444 aa)). The interval 225 to 248 (KRGNPHVSRDPNPPQLPSGAGPPA) is disordered. Asn-371 is a glycosylation site (N-linked (GlcNAc...) asparagine).

This sequence belongs to the galactose-3-O-sulfotransferase family. Mn(2+) is required as a cofactor.

It is found in the golgi apparatus. The protein localises to the golgi stack membrane. The protein operates within protein modification; carbohydrate sulfation. Catalyzes the transfer of sulfate to beta-1,3-linked galactose residues in O-linked glycoproteins. Good substrates include asialofetuin, Gal-beta-1,3-GalNAc and Gal-beta-1,3 (GlcNAc-beta-1,6)GalNAc. This is Galactose-3-O-sulfotransferase 4 (GAL3ST4) from Bos taurus (Bovine).